The sequence spans 422 residues: Aliphatic (R)-hydroxynitrile lyase (422 aa).

Cys63, His85, Cys115, Cys118, Cys121, Cys129, and Cys199 together coordinate Zn(2+).

The protein belongs to the zinc-containing alcohol dehydrogenase family. Homodimer. Zn(2+) serves as cofactor.

It catalyses the reaction (2R)-2-hydroxy-2-methylbutanenitrile = butan-2-one + hydrogen cyanide. Its function is as follows. Involved in the catabolism of cyanogenic glycosides. Naturally occurring substrates are the aliphatic acetone cyanohydrin and butan-2-one cyanohydrin, which are the aglycones of the cyanogenic glycosides linamarin, lotaustralin, linustatin and neolinustatin. Can use various aliphatic ketones and aldehydes as substrates, but not aromatic ketones. This chain is Aliphatic (R)-hydroxynitrile lyase, found in Linum usitatissimum (Flax).